A 606-amino-acid polypeptide reads, in one-letter code: Probable potassium transport system protein Kup 2 (606 aa).

A run of 12 helical transmembrane segments spans residues 18 to 38 (GLVF…IMTL), 46 to 66 (VLGI…VEYA), 97 to 117 (VAFV…DGII), 140 to 160 (AQGV…IFQF), 169 to 189 (AFGP…IVSI), 204 to 224 (AVTF…EVIL), 247 to 267 (AWYF…AFIL), 286 to 306 (ILYI…SQAL), 339 to 359 (IYIG…MLIF), 368 to 388 (AYGL…TMIF), 395 to 415 (WKVP…TANF), and 418 to 438 (LPHG…IMII).

It belongs to the HAK/KUP transporter (TC 2.A.72) family.

It is found in the cell inner membrane. The enzyme catalyses K(+)(in) + H(+)(in) = K(+)(out) + H(+)(out). Functionally, transport of potassium into the cell. Likely operates as a K(+):H(+) symporter. The protein is Probable potassium transport system protein Kup 2 of Geobacter metallireducens (strain ATCC 53774 / DSM 7210 / GS-15).